Consider the following 339-residue polypeptide: Sulfate/thiosulfate import ATP-binding protein CysA (339 aa).

An ABC transporter domain is found at 3 to 237 (IAIRSVEKQF…PETAFVCGFV (235 aa)). ATP is bound at residue 35–42 (GPSGSGKT).

Belongs to the ABC transporter superfamily. Sulfate/tungstate importer (TC 3.A.1.6) family. The complex is composed of two ATP-binding proteins (CysA), two transmembrane proteins (CysT and CysW) and a solute-binding protein (CysP).

The protein localises to the cell inner membrane. It catalyses the reaction sulfate(out) + ATP + H2O = sulfate(in) + ADP + phosphate + H(+). The catalysed reaction is thiosulfate(out) + ATP + H2O = thiosulfate(in) + ADP + phosphate + H(+). Part of the ABC transporter complex CysAWTP involved in sulfate/thiosulfate import. Responsible for energy coupling to the transport system. This Caulobacter vibrioides (strain ATCC 19089 / CIP 103742 / CB 15) (Caulobacter crescentus) protein is Sulfate/thiosulfate import ATP-binding protein CysA.